The chain runs to 454 residues: Keratin, type I cuticular Ha5 (454 aa).

A head region spans residues 1–97; sequence MASKCLKASF…FGEGILTGNE (97 aa). An IF rod domain is found at 97–407; it reads EKETMQFLND…GLLDSEDCKL (311 aa). A coil 1A region spans residues 98 to 125; it reads KETMQFLNDRLASYLEKCGSWSGRTRSW. The segment at 134 to 142 is linker 1; that stretch reads SNSALPVPD. Residues 143-243 are coil 1B; that stretch reads YQSYFQTIEE…HEEEVNSLRC (101 aa). The interval 244–259 is linker 12; sequence QLGDRLNVEVDAAPPV. The coil 2 stretch occupies residues 260 to 403; sequence DLNRVLNEMR…NTYRGLLDSE (144 aa). The tail stretch occupies residues 404–454; the sequence is DCKLPCNPCAPDHSPSKSCLPCLPAASCGPGMARTTCSPRPICVPCPGSRF.

This sequence belongs to the intermediate filament family.

This chain is Keratin, type I cuticular Ha5, found in Bos taurus (Bovine).